A 458-amino-acid polypeptide reads, in one-letter code: Argininosuccinate lyase (458 aa).

This sequence belongs to the lyase 1 family. Argininosuccinate lyase subfamily.

The protein resides in the cytoplasm. It carries out the reaction 2-(N(omega)-L-arginino)succinate = fumarate + L-arginine. It functions in the pathway amino-acid biosynthesis; L-arginine biosynthesis; L-arginine from L-ornithine and carbamoyl phosphate: step 3/3. This Salmonella heidelberg (strain SL476) protein is Argininosuccinate lyase.